The following is a 710-amino-acid chain: Adenylosuccinate synthetase (710 aa).

Disordered stretches follow at residues 1–57 (MPVR…NHAK) and 82–112 (MDDE…SAQC). Low complexity predominate over residues 11 to 25 (NNSSSGVSNALSSSS). Residues 32–43 (SPSSRENSTPLS) show a composition bias toward polar residues. GTP contacts are provided by residues 180–186 (GDEGKGK) and 210–212 (GHT). Aspartate 181 serves as the catalytic Proton acceptor. The Mg(2+) site is built by aspartate 181 and glycine 210. IMP contacts are provided by residues 181 to 184 (DEGK), 208 to 211 (NAGH), threonine 295, lysine 309, glutamine 421, threonine 437, and lysine 567. Histidine 211 functions as the Proton donor in the catalytic mechanism. A substrate-binding site is contributed by 563 to 569 (AVTKKPR). GTP is bound by residues arginine 569 and 697 to 699 (GNG).

It belongs to the adenylosuccinate synthetase family. As to quaternary structure, homodimer. Mg(2+) serves as cofactor.

It is found in the cytoplasm. It catalyses the reaction IMP + L-aspartate + GTP = N(6)-(1,2-dicarboxyethyl)-AMP + GDP + phosphate + 2 H(+). The protein operates within purine metabolism; AMP biosynthesis via de novo pathway; AMP from IMP: step 1/2. Plays an important role in the salvage pathway for purine nucleotide biosynthesis. Catalyzes the first committed step in the biosynthesis of AMP from IMP. The polypeptide is Adenylosuccinate synthetase (Leishmania braziliensis).